The chain runs to 326 residues: Probable cell division protein WhiA (326 aa).

A DNA-binding region (H-T-H motif) is located at residues 275-308; it reads SLEELGQLSDPPLTKDAVAGRIRRLLAMADKKAS.

This sequence belongs to the WhiA family.

Its function is as follows. Involved in cell division and chromosome segregation. This is Probable cell division protein WhiA from Beutenbergia cavernae (strain ATCC BAA-8 / DSM 12333 / CCUG 43141 / JCM 11478 / NBRC 16432 / NCIMB 13614 / HKI 0122).